Reading from the N-terminus, the 347-residue chain is Quinolinate synthase (347 aa).

Residues H47 and S68 each coordinate iminosuccinate. C113 contacts [4Fe-4S] cluster. Residues 139–141 (YAN) and S156 each bind iminosuccinate. C200 is a [4Fe-4S] cluster binding site. Iminosuccinate-binding positions include 226–228 (HPE) and T243. Position 297 (C297) interacts with [4Fe-4S] cluster.

Belongs to the quinolinate synthase family. Type 1 subfamily. Requires [4Fe-4S] cluster as cofactor.

Its subcellular location is the cytoplasm. The catalysed reaction is iminosuccinate + dihydroxyacetone phosphate = quinolinate + phosphate + 2 H2O + H(+). It functions in the pathway cofactor biosynthesis; NAD(+) biosynthesis; quinolinate from iminoaspartate: step 1/1. In terms of biological role, catalyzes the condensation of iminoaspartate with dihydroxyacetone phosphate to form quinolinate. This Escherichia coli O139:H28 (strain E24377A / ETEC) protein is Quinolinate synthase.